An 876-amino-acid chain; its full sequence is Protein TORMOZ EMBRYO DEFECTIVE (876 aa).

WD repeat units follow at residues glycine 58–serine 97, glycine 100–tyrosine 139, glycine 142–lysine 183, lysine 190–threonine 229, leucine 255–glutamate 294, glutamate 308–glutamate 347, glycine 356–valine 396, glycine 399–valine 441, glycine 444–glutamate 484, alanine 497–threonine 536, glycine 539–glutamate 580, glycine 581–threonine 620, and glutamine 623–aspartate 662. Positions valine 816–valine 876 are disordered. Residues glutamate 819–valine 831 are compositionally biased toward basic and acidic residues. The short motif at serine 848–lysine 855 is the Nuclear localization signal element. The segment covering arginine 849 to arginine 864 has biased composition (basic residues).

As to expression, preferentially expressed in dividing cells in a variety of tissues and meristematic regions.

Its subcellular location is the nucleus. It localises to the nucleolus. Essential protein involved in the regulation of cell division planes during embryogenesis which defines cell patterning, especially longitudinal division planes of the proembryo, probably via the regulation of embryo patterning genes expression patterns. This is Protein TORMOZ EMBRYO DEFECTIVE from Arabidopsis thaliana (Mouse-ear cress).